Reading from the N-terminus, the 100-residue chain is NADH-quinone oxidoreductase subunit K (100 aa).

Transmembrane regions (helical) follow at residues 2–22 (ISLNHYLLLCVILFCIGLFGI), 28–48 (ILMLFFSTEILLNAINIGFVA), and 63–83 (LFIIAIAASEIAVGLGLVVIW).

This sequence belongs to the complex I subunit 4L family. As to quaternary structure, NDH-1 is composed of 14 different subunits. Subunits NuoA, H, J, K, L, M, N constitute the membrane sector of the complex.

It is found in the cell inner membrane. It carries out the reaction a quinone + NADH + 5 H(+)(in) = a quinol + NAD(+) + 4 H(+)(out). Functionally, NDH-1 shuttles electrons from NADH, via FMN and iron-sulfur (Fe-S) centers, to quinones in the respiratory chain. The immediate electron acceptor for the enzyme in this species is believed to be ubiquinone. Couples the redox reaction to proton translocation (for every two electrons transferred, four hydrogen ions are translocated across the cytoplasmic membrane), and thus conserves the redox energy in a proton gradient. The polypeptide is NADH-quinone oxidoreductase subunit K (Helicobacter hepaticus (strain ATCC 51449 / 3B1)).